The following is a 216-amino-acid chain: Somatotropin (216 aa).

An N-terminal signal peptide occupies residues 1–26 (MATGSQTSWLLTFTLLCLPWPQEAGA). Histidine 45 contributes to the Zn(2+) binding site. A disulfide bridge links cysteine 78 with cysteine 189. Serine 131 carries the post-translational modification Phosphoserine. Glutamate 198 contributes to the Zn(2+) binding site. Cysteine 206 and cysteine 214 are joined by a disulfide.

It belongs to the somatotropin/prolactin family.

The protein localises to the secreted. Functionally, plays an important role in growth control. Its major role in stimulating body growth is to stimulate the liver and other tissues to secrete IGF1. It stimulates both the differentiation and proliferation of myoblasts. It also stimulates amino acid uptake and protein synthesis in muscle and other tissues. In Spalax ehrenbergi (Middle East blind mole rat), this protein is Somatotropin (GH1).